Consider the following 340-residue polypeptide: Glycerol-3-phosphate dehydrogenase [NAD(P)+] (340 aa).

Residues serine 13, tyrosine 14, and lysine 108 each contribute to the NADPH site. Residues lysine 108, glycine 137, and threonine 139 each contribute to the sn-glycerol 3-phosphate site. Alanine 141 contributes to the NADPH binding site. Positions 193, 246, 256, 257, and 258 each coordinate sn-glycerol 3-phosphate. Lysine 193 (proton acceptor) is an active-site residue. Residue arginine 257 participates in NADPH binding. NADPH is bound by residues isoleucine 281 and glutamate 283.

The protein belongs to the NAD-dependent glycerol-3-phosphate dehydrogenase family.

The protein localises to the cytoplasm. It catalyses the reaction sn-glycerol 3-phosphate + NAD(+) = dihydroxyacetone phosphate + NADH + H(+). It carries out the reaction sn-glycerol 3-phosphate + NADP(+) = dihydroxyacetone phosphate + NADPH + H(+). It functions in the pathway membrane lipid metabolism; glycerophospholipid metabolism. Its function is as follows. Catalyzes the reduction of the glycolytic intermediate dihydroxyacetone phosphate (DHAP) to sn-glycerol 3-phosphate (G3P), the key precursor for phospholipid synthesis. The protein is Glycerol-3-phosphate dehydrogenase [NAD(P)+] of Bartonella quintana (strain Toulouse) (Rochalimaea quintana).